The chain runs to 187 residues: Putative glutathione-dependent formaldehyde-activating enzyme (187 aa).

Positions 20-166 (FQGGVLKCKC…FESLGLESYD (147 aa)) constitute a CENP-V/GFA domain. 7 residues coordinate Zn(2+): C27, C29, C48, C50, C53, C95, and C98.

Belongs to the Gfa family. Requires Zn(2+) as cofactor.

The enzyme catalyses S-(hydroxymethyl)glutathione = glutathione + formaldehyde. Its pathway is one-carbon metabolism; formaldehyde degradation; formate from formaldehyde (glutathione route): step 1/3. In terms of biological role, catalyzes the condensation of formaldehyde and glutathione to S-hydroxymethylglutathione. In Verticillium alfalfae (strain VaMs.102 / ATCC MYA-4576 / FGSC 10136) (Verticillium wilt of alfalfa), this protein is Putative glutathione-dependent formaldehyde-activating enzyme.